The chain runs to 485 residues: Telomeric DNA-binding factor trf1 (485 aa).

A compositionally biased stretch (basic and acidic residues) spans Met-1 to Ile-20. The segment at Met-1–Glu-23 is disordered. The HTH myb-type domain occupies Arg-400 to Ala-457. The H-T-H motif DNA-binding region spans Trp-428–Leu-453.

Homodimer.

Its subcellular location is the nucleus. Its function is as follows. Binds the telomeric double-stranded TTACAGG repeat and regulates telomere length. This is Telomeric DNA-binding factor trf1 (trf1) from Schizosaccharomyces pombe (strain 972 / ATCC 24843) (Fission yeast).